Reading from the N-terminus, the 231-residue chain is Flagellar L-ring protein (231 aa).

The N-terminal stretch at 1–18 (MNRYVSVLALSGIAVLAG) is a signal peptide. The N-palmitoyl cysteine moiety is linked to residue Cys19. A lipid anchor (S-diacylglycerol cysteine) is attached at Cys19.

This sequence belongs to the FlgH family. As to quaternary structure, the basal body constitutes a major portion of the flagellar organelle and consists of four rings (L,P,S, and M) mounted on a central rod.

The protein localises to the cell outer membrane. Its subcellular location is the bacterial flagellum basal body. Its function is as follows. Assembles around the rod to form the L-ring and probably protects the motor/basal body from shearing forces during rotation. In Pseudomonas fluorescens (strain SBW25), this protein is Flagellar L-ring protein.